A 64-amino-acid chain; its full sequence is Large ribosomal subunit protein uL29 (64 aa).

The protein belongs to the universal ribosomal protein uL29 family.

The protein is Large ribosomal subunit protein uL29 of Teredinibacter turnerae (strain ATCC 39867 / T7901).